The sequence spans 211 residues: tRNA (guanine-N(7)-)-methyltransferase (211 aa).

4 residues coordinate S-adenosyl-L-methionine: glutamate 44, aspartate 69, aspartate 96, and aspartate 118. Aspartate 118 is a catalytic residue. Position 122 (lysine 122) interacts with substrate. The interval 124–129 (KHEKRR) is interaction with RNA. Substrate-binding positions include aspartate 154 and 191–194 (TEYE).

This sequence belongs to the class I-like SAM-binding methyltransferase superfamily. TrmB family.

The catalysed reaction is guanosine(46) in tRNA + S-adenosyl-L-methionine = N(7)-methylguanosine(46) in tRNA + S-adenosyl-L-homocysteine. The protein operates within tRNA modification; N(7)-methylguanine-tRNA biosynthesis. In terms of biological role, catalyzes the formation of N(7)-methylguanine at position 46 (m7G46) in tRNA. The chain is tRNA (guanine-N(7)-)-methyltransferase from Streptococcus uberis (strain ATCC BAA-854 / 0140J).